The following is a 320-amino-acid chain: Ferrochelatase (320 aa).

Residues His194 and Glu275 each contribute to the Fe cation site.

It belongs to the ferrochelatase family. In terms of assembly, monomer.

The protein localises to the cytoplasm. It catalyses the reaction heme b + 2 H(+) = protoporphyrin IX + Fe(2+). Its pathway is porphyrin-containing compound metabolism; protoheme biosynthesis; protoheme from protoporphyrin-IX: step 1/1. Functionally, catalyzes the ferrous insertion into protoporphyrin IX. In Salmonella schwarzengrund (strain CVM19633), this protein is Ferrochelatase.